We begin with the raw amino-acid sequence, 288 residues long: Translocon-associated protein subunit alpha (288 aa).

Residues Met-1–Ala-28 form the signal peptide. Residues Asp-29–Thr-208 lie on the Lumenal side of the membrane. The tract at residues Glu-34–Ile-69 is disordered. N-linked (GlcNAc...) asparagine glycans are attached at residues Asn-137 and Asn-192. A helical transmembrane segment spans residues Ile-209–Val-229. The Cytoplasmic portion of the chain corresponds to Leu-230 to Gln-288. Residues Lys-267 to Gln-288 are disordered.

This sequence belongs to the TRAP-alpha family. As to quaternary structure, heterotetramer of TRAP-alpha, TRAP-beta, TRAP-delta and TRAP-gamma. In terms of processing, phosphorylated in its cytoplasmic tail.

The protein localises to the endoplasmic reticulum membrane. Functionally, TRAP proteins are part of a complex whose function is to bind calcium to the ER membrane and thereby regulate the retention of ER resident proteins. May be involved in the recycling of the translocation apparatus after completion of the translocation process or may function as a membrane-bound chaperone facilitating folding of translocated proteins. The sequence is that of Translocon-associated protein subunit alpha (ssr1) from Oncorhynchus mykiss (Rainbow trout).